Consider the following 91-residue polypeptide: PqqA binding protein (91 aa).

Belongs to the PqqD family. Monomer. Interacts with PqqE.

It functions in the pathway cofactor biosynthesis; pyrroloquinoline quinone biosynthesis. In terms of biological role, functions as a PqqA binding protein and presents PqqA to PqqE, in the pyrroloquinoline quinone (PQQ) biosynthetic pathway. This Pseudomonas fluorescens (strain ATCC BAA-477 / NRRL B-23932 / Pf-5) protein is PqqA binding protein.